The sequence spans 287 residues: Aquaporin PIP2-1 (287 aa).

M1 carries the N-acetylmethionine modification. The Cytoplasmic segment spans residues 2–39 (AKDVEAVPGEGFQTRDYQDPPPAPFIDGAELKKWSFYR). An N6,N6-dimethyllysine; partial modification is found at K3. A helical transmembrane segment spans residues 40-60 (AVIAEFVATLLFLYITVLTVI). Residues 61–83 (GYKIQSDTDAGGVDCGGVGILGI) lie on the Extracellular side of the membrane. The helical transmembrane segment at 84 to 104 (AWAFGGMIFILVYCTAGISGG) threads the bilayer. At 105–125 (HINPAVTFGLFLARKVSLPRA) the chain is on the cytoplasmic side. Residues 107-109 (NPA) carry the NPA 1 motif. Residues 126–146 (LLYIIAQCLGAICGVGFVKAF) traverse the membrane as a helical segment. Over 147–167 (QSSYYTRYGGGANSLADGYST) the chain is Extracellular. A helical transmembrane segment spans residues 168–188 (GTGLAAEIIGTFVLVYTVFSA). Over 189–201 (TDPKRSARDSHVP) the chain is Cytoplasmic. A helical transmembrane segment spans residues 202 to 222 (VLAPLPIGFAVFMVHLATIPI). At 223-249 (TGTGINPARSFGAAVIYNKSKPWDDHW) the chain is on the extracellular side. The NPA 2 signature appears at 228–230 (NPA). A helical transmembrane segment spans residues 250 to 270 (IFWVGPFIGAAIAAFYHQFVL). Residues 271–287 (RASGSKSLGSFRSAANV) are Cytoplasmic-facing. S280 and S283 each carry phosphoserine.

The protein belongs to the MIP/aquaporin (TC 1.A.8) family. PIP (TC 1.A.8.11) subfamily. Post-translationally, ubiquitinated by RMA1, leading to proteasomal degradation. The phosphorylation at Ser-280 and Ser-283 is altered by salt (NaCl) and hydrogen peroxide H(2)O(2) treatments. Phosphorylation of Ser-283 is required for plasma membrane targeting. In terms of tissue distribution, predominantly expressed in roots and green siliques. Also expressed at lower level above ground and in flower buds.

Its subcellular location is the cell membrane. Its function is as follows. Water channel required to facilitate the transport of water across cell membrane. Probably involved in root water uptake. Its function is impaired by Hg(2+). This Arabidopsis thaliana (Mouse-ear cress) protein is Aquaporin PIP2-1 (PIP2-1).